Reading from the N-terminus, the 95-residue chain is Cytochrome b-c1 complex subunit 8, mitochondrial (95 aa).

The helical transmembrane segment at Phe57–Ala74 threads the bilayer.

The protein belongs to the UQCRQ/QCR8 family. In terms of assembly, component of the ubiquinol-cytochrome c oxidoreductase (cytochrome b-c1 complex, complex III, CIII), a multisubunit enzyme composed of 10 subunits. The complex is composed of 3 respiratory subunits cytochrome b (COB), cytochrome c1 (CYT1) and Rieske protein (RIP1), 2 core protein subunits COR1 and QCR2, and 5 low-molecular weight protein subunits QCR6, QCR7, QCR8, QCR9 and QCR10. The complex exists as an obligatory dimer and forms supercomplexes (SCs) in the inner mitochondrial membrane with a monomer or a dimer of cytochrome c oxidase (complex IV, CIV), resulting in 2 different assemblies (supercomplexes III(2)IV and III(2)IV(2)).

It is found in the membrane. The protein resides in the mitochondrion inner membrane. Its function is as follows. Component of the ubiquinol-cytochrome c oxidoreductase, a multisubunit transmembrane complex that is part of the mitochondrial electron transport chain which drives oxidative phosphorylation. The complex plays an important role in the uptake of multiple carbon sources present in different host niches. This is Cytochrome b-c1 complex subunit 8, mitochondrial from Candida albicans (strain SC5314 / ATCC MYA-2876) (Yeast).